The following is a 362-amino-acid chain: UDP-N-acetylglucosamine--N-acetylmuramyl-(pentapeptide) pyrophosphoryl-undecaprenol N-acetylglucosamine transferase (362 aa).

UDP-N-acetyl-alpha-D-glucosamine-binding positions include 14–16, Arg-170, Ser-199, and Gln-289; that span reads TGG.

It belongs to the glycosyltransferase 28 family. MurG subfamily.

It is found in the cell inner membrane. The catalysed reaction is di-trans,octa-cis-undecaprenyl diphospho-N-acetyl-alpha-D-muramoyl-L-alanyl-D-glutamyl-meso-2,6-diaminopimeloyl-D-alanyl-D-alanine + UDP-N-acetyl-alpha-D-glucosamine = di-trans,octa-cis-undecaprenyl diphospho-[N-acetyl-alpha-D-glucosaminyl-(1-&gt;4)]-N-acetyl-alpha-D-muramoyl-L-alanyl-D-glutamyl-meso-2,6-diaminopimeloyl-D-alanyl-D-alanine + UDP + H(+). It participates in cell wall biogenesis; peptidoglycan biosynthesis. In terms of biological role, cell wall formation. Catalyzes the transfer of a GlcNAc subunit on undecaprenyl-pyrophosphoryl-MurNAc-pentapeptide (lipid intermediate I) to form undecaprenyl-pyrophosphoryl-MurNAc-(pentapeptide)GlcNAc (lipid intermediate II). In Borrelia turicatae (strain 91E135), this protein is UDP-N-acetylglucosamine--N-acetylmuramyl-(pentapeptide) pyrophosphoryl-undecaprenol N-acetylglucosamine transferase.